Reading from the N-terminus, the 116-residue chain is NADH-ubiquinone oxidoreductase chain 3 (116 aa).

A run of 3 helical transmembrane segments spans residues 3 to 23 (LIMT…TVSF), 56 to 76 (FFLV…LLPL), and 87 to 107 (GTFF…IYEW).

The protein belongs to the complex I subunit 3 family.

Its subcellular location is the mitochondrion membrane. The enzyme catalyses a ubiquinone + NADH + 5 H(+)(in) = a ubiquinol + NAD(+) + 4 H(+)(out). Functionally, core subunit of the mitochondrial membrane respiratory chain NADH dehydrogenase (Complex I) that is believed to belong to the minimal assembly required for catalysis. Complex I functions in the transfer of electrons from NADH to the respiratory chain. The immediate electron acceptor for the enzyme is believed to be ubiquinone. This is NADH-ubiquinone oxidoreductase chain 3 (MT-ND3) from Cyprinus carpio (Common carp).